The following is a 23-amino-acid chain: Cytochrome c3-1 (23 aa).

The disordered stretch occupies residues 1-23; the sequence is AAPKAPADGLKMDKTKQXVVFNH. Heme is bound at residue H23.

In terms of processing, binds 4 heme groups per subunit.

It localises to the periplasm. Participates in sulfate respiration coupled with phosphorylation by transferring electrons from the enzyme dehydrogenase to ferredoxin. The polypeptide is Cytochrome c3-1 (Nitratidesulfovibrio vulgaris (Desulfovibrio vulgaris)).